The sequence spans 113 residues: UPF0212 protein MmarC6_1165 (113 aa).

Belongs to the UPF0212 family.

This Methanococcus maripaludis (strain C6 / ATCC BAA-1332) protein is UPF0212 protein MmarC6_1165.